Consider the following 270-residue polypeptide: uncharacterized protein (270 aa).

Residue 30–55 (ATGSLGRVAARALADAGARLTLAGGN) coordinates NADP(+). Residue serine 157 coordinates substrate. The active-site Proton acceptor is tyrosine 171.

It belongs to the short-chain dehydrogenases/reductases (SDR) family.

This is an uncharacterized protein from Mycobacterium tuberculosis (strain CDC 1551 / Oshkosh).